The sequence spans 399 residues: Elongation factor Tu (399 aa).

Positions 10 to 204 (KPHVNIGTIG…AVDASIPEPE (195 aa)) constitute a tr-type G domain. Positions 19–26 (GHVDHGKT) are G1. 19 to 26 (GHVDHGKT) contributes to the GTP binding site. A Mg(2+)-binding site is contributed by T26. The G2 stretch occupies residues 60-64 (GITIN). The segment at 81 to 84 (DCPG) is G3. Residues 81-85 (DCPGH) and 136-139 (NKCD) each bind GTP. Residues 136–139 (NKCD) are G4. The interval 174–176 (SGL) is G5.

It belongs to the TRAFAC class translation factor GTPase superfamily. Classic translation factor GTPase family. EF-Tu/EF-1A subfamily. As to quaternary structure, monomer.

It localises to the cytoplasm. The catalysed reaction is GTP + H2O = GDP + phosphate + H(+). GTP hydrolase that promotes the GTP-dependent binding of aminoacyl-tRNA to the A-site of ribosomes during protein biosynthesis. This Prochlorococcus marinus (strain AS9601) protein is Elongation factor Tu.